An 89-amino-acid chain; its full sequence is Tuberculin-active protein (89 aa).

C27 and C59 are disulfide-bonded. The disordered stretch occupies residues 61 to 89; the sequence is DGGSESEGKNGSQMRLIADVGPESATVAK.

Functionally, tuberculin is the soluble, proteinaceous cell substance of the bacterium, to which infected animals become hypersensitive and react characteristically to dermal injections. The chain is Tuberculin-active protein from Mycobacterium tuberculosis.